The following is a 58-amino-acid chain: Protein translocase subunit SecE (58 aa).

A helical membrane pass occupies residues I38–I58.

This sequence belongs to the SecE/SEC61-gamma family. In terms of assembly, component of the Sec protein translocase complex. Heterotrimer consisting of SecY (alpha), SecG (beta) and SecE (gamma) subunits. The heterotrimers can form oligomers, although 1 heterotrimer is thought to be able to translocate proteins. Interacts with the ribosome. May interact with SecDF, and other proteins may be involved.

The protein localises to the cell membrane. In terms of biological role, essential subunit of the Sec protein translocation channel SecYEG. Clamps together the 2 halves of SecY. May contact the channel plug during translocation. This chain is Protein translocase subunit SecE, found in Acidianus ambivalens (Desulfurolobus ambivalens).